The following is a 263-amino-acid chain: 4-hydroxy-tetrahydrodipicolinate reductase (263 aa).

Residues 7 to 12 (GASGRM) and Asp-33 contribute to the NAD(+) site. Residue Arg-34 coordinates NADP(+). NAD(+)-binding positions include 96 to 98 (GTT) and 120 to 123 (APNM). The active-site Proton donor/acceptor is the His-153. His-154 contributes to the (S)-2,3,4,5-tetrahydrodipicolinate binding site. The active-site Proton donor is Lys-157. 163-164 (GT) contributes to the (S)-2,3,4,5-tetrahydrodipicolinate binding site.

Belongs to the DapB family.

It is found in the cytoplasm. It catalyses the reaction (S)-2,3,4,5-tetrahydrodipicolinate + NAD(+) + H2O = (2S,4S)-4-hydroxy-2,3,4,5-tetrahydrodipicolinate + NADH + H(+). The enzyme catalyses (S)-2,3,4,5-tetrahydrodipicolinate + NADP(+) + H2O = (2S,4S)-4-hydroxy-2,3,4,5-tetrahydrodipicolinate + NADPH + H(+). Its pathway is amino-acid biosynthesis; L-lysine biosynthesis via DAP pathway; (S)-tetrahydrodipicolinate from L-aspartate: step 4/4. Catalyzes the conversion of 4-hydroxy-tetrahydrodipicolinate (HTPA) to tetrahydrodipicolinate. This chain is 4-hydroxy-tetrahydrodipicolinate reductase, found in Ralstonia pickettii (strain 12J).